The primary structure comprises 659 residues: L-type lectin-domain containing receptor kinase V.7 (659 aa).

An N-terminal signal peptide occupies residues 1 to 25 (MSHKVLQIVLVLLLTLFSSTHNSNG). Residues 22-244 (NSNGNFLMEE…GALYYVMQFS (223 aa)) form a legume-lectin like region. The Extracellular portion of the chain corresponds to 26-275 (NFLMEEAAAA…PKKSYDRTRR (250 aa)). Asn-45, Asn-64, Asn-110, and Asn-192 each carry an N-linked (GlcNAc...) asparagine glycan. The helical transmembrane segment at 276–296 (ILAVCLTLAVFTALVASGIGF) threads the bilayer. Over 297-659 (VFYVRHKKVK…LTNSFVSHGR (363 aa)) the chain is Cytoplasmic. Residues 333-595 (FKEKQLLGKG…GLLCAHHTEL (263 aa)) enclose the Protein kinase domain. Residues 339-347 (LGKGGFGQV) and Lys-362 each bind ATP. Residue Asp-462 is the Proton acceptor of the active site.

In the C-terminal section; belongs to the protein kinase superfamily. Ser/Thr protein kinase family. The protein in the N-terminal section; belongs to the leguminous lectin family.

It is found in the cell membrane. The enzyme catalyses L-seryl-[protein] + ATP = O-phospho-L-seryl-[protein] + ADP + H(+). The catalysed reaction is L-threonyl-[protein] + ATP = O-phospho-L-threonyl-[protein] + ADP + H(+). Its function is as follows. Involved in resistance response to the pathogenic oomycetes Phytophthora infestans and Phytophthora capsici and to the pathogenic bacteria Pseudomonas syringae. The polypeptide is L-type lectin-domain containing receptor kinase V.7 (Arabidopsis thaliana (Mouse-ear cress)).